Reading from the N-terminus, the 323-residue chain is tRNA dimethylallyltransferase (323 aa).

12-19 serves as a coordination point for ATP; that stretch reads GPTASGKT. 14–19 is a substrate binding site; the sequence is TASGKT. Interaction with substrate tRNA stretches follow at residues 37-40 and 161-165; these read DSAL and QRLVR.

The protein belongs to the IPP transferase family. As to quaternary structure, monomer. Mg(2+) is required as a cofactor.

The enzyme catalyses adenosine(37) in tRNA + dimethylallyl diphosphate = N(6)-dimethylallyladenosine(37) in tRNA + diphosphate. Its function is as follows. Catalyzes the transfer of a dimethylallyl group onto the adenine at position 37 in tRNAs that read codons beginning with uridine, leading to the formation of N6-(dimethylallyl)adenosine (i(6)A). This is tRNA dimethylallyltransferase from Stutzerimonas stutzeri (strain A1501) (Pseudomonas stutzeri).